The primary structure comprises 300 residues: GTPase Era (300 aa).

Residues 8–176 (RCGYVAIVGR…ESLIASHLPE (169 aa)) form the Era-type G domain. A G1 region spans residues 16 to 23 (GRPNVGKS). 16–23 (GRPNVGKS) contributes to the GTP binding site. Residues 42–46 (QTTRH) form a G2 region. The interval 63–66 (DTPG) is G3. Residues 63-67 (DTPGM) and 125-128 (NKTD) each bind GTP. A G4 region spans residues 125-128 (NKTD). The segment at 155–157 (ISA) is G5. In terms of domain architecture, KH type-2 spans 199 to 283 (VREKIMRQLG…MLNLWVKVKG (85 aa)).

Belongs to the TRAFAC class TrmE-Era-EngA-EngB-Septin-like GTPase superfamily. Era GTPase family. As to quaternary structure, monomer.

The protein localises to the cytoplasm. The protein resides in the cell inner membrane. Its function is as follows. An essential GTPase that binds both GDP and GTP, with rapid nucleotide exchange. Plays a role in 16S rRNA processing and 30S ribosomal subunit biogenesis and possibly also in cell cycle regulation and energy metabolism. The sequence is that of GTPase Era from Pseudomonas syringae pv. tomato (strain ATCC BAA-871 / DC3000).